The sequence spans 509 residues: MANIINLWNGIVPMVQDVNVASITAFKSMIDETWDKKIEANTCISRKHRNIIHEVIRDFMKAYPKMDENRKSPLGAPMQWLTQYYILKNEYHKTMLAYDDGSLNTKFKTLNIYMITNVGQYILYIVFCIISGKNHDGTPYIYDSEITSNDKNLINDRIKYACKQILHGQLTMALRIRNKFMFIGSPMYLWFNVNGSHVYHEIYDRNVGFHNKEIGRLLYAFMYYLSISGRFLNDLALLKFTYLGESWTFSLSVPEYILYGLGYSVFDTIEKFSNDAILVYIRTNNRNGYDYAEFNKKGIVKVTEDKPDNDKRIHAIRLINYSSDVQHIHFGFRNTLIIDNECTNIQSSAENATDIGHYQDSKINIEDDDIIDDDDDDDDDDDDDDYNPKPTPIPDPHPRPPFPRHDYHKRPKLLPVEEPDPVKKDADRIRLDNHILNTLDHNLNSIGHYCCDTVAVDRLEHHIETLGQYTVILARKINMQTLLFPWPLPTVHQHAIDGSIPPHGRSTIL.

Cysteines 43 and 342 form a disulfide. Residues 356–421 (GHYQDSKINI…KLLPVEEPDP (66 aa)) form a disordered region. Residues 366–385 (EDDDIIDDDDDDDDDDDDDD) show a composition bias toward acidic residues. Pro residues predominate over residues 389–401 (KPTPIPDPHPRPP).

It belongs to the orthopoxvirus OPG153 protein family. Interacts with proteins OPG094 and OPG143. Interacts with OPG154. Interacts with OPG152. Interacts with host laminin.

It is found in the virion membrane. Envelop protein that mediates acid-dependent endocytosis into host cells. Plays an important role in endocytic entry of the virus by acting as an acid-sensitive membrane fusion suppressor. Low pH in host endosomes triggers conformational changes to allow de-repression of viral fusion complex activity and membrane fusion within vesicles. Also plays a role in bridging the mature virion with structural protein OPG152. The polypeptide is Envelop protein OPG153 (OPG153) (Monkeypox virus).